A 212-amino-acid polypeptide reads, in one-letter code: ATP phosphoribosyltransferase (212 aa).

This sequence belongs to the ATP phosphoribosyltransferase family. Short subfamily. As to quaternary structure, heteromultimer composed of HisG and HisZ subunits.

Its subcellular location is the cytoplasm. It carries out the reaction 1-(5-phospho-beta-D-ribosyl)-ATP + diphosphate = 5-phospho-alpha-D-ribose 1-diphosphate + ATP. Its pathway is amino-acid biosynthesis; L-histidine biosynthesis; L-histidine from 5-phospho-alpha-D-ribose 1-diphosphate: step 1/9. Functionally, catalyzes the condensation of ATP and 5-phosphoribose 1-diphosphate to form N'-(5'-phosphoribosyl)-ATP (PR-ATP). Has a crucial role in the pathway because the rate of histidine biosynthesis seems to be controlled primarily by regulation of HisG enzymatic activity. The sequence is that of ATP phosphoribosyltransferase from Prochlorococcus marinus (strain AS9601).